The sequence spans 532 residues: Chaperonin GroEL 2 (532 aa).

ATP contacts are provided by residues 30–33 (TLGP), lysine 51, 87–91 (DGTTT), glycine 415, 479–481 (NAA), and aspartate 495.

Belongs to the chaperonin (HSP60) family. In terms of assembly, forms a cylinder of 14 subunits composed of two heptameric rings stacked back-to-back. Interacts with the co-chaperonin GroES.

The protein localises to the cytoplasm. It carries out the reaction ATP + H2O + a folded polypeptide = ADP + phosphate + an unfolded polypeptide.. In terms of biological role, together with its co-chaperonin GroES, plays an essential role in assisting protein folding. The GroEL-GroES system forms a nano-cage that allows encapsulation of the non-native substrate proteins and provides a physical environment optimized to promote and accelerate protein folding. The sequence is that of Chaperonin GroEL 2 from Vibrio parahaemolyticus serotype O3:K6 (strain RIMD 2210633).